The primary structure comprises 384 residues: S-adenosylmethionine synthase (384 aa).

Histidine 15 contacts ATP. Mg(2+) is bound at residue aspartate 17. Residue glutamate 43 coordinates K(+). Residues glutamate 56 and glutamine 99 each coordinate L-methionine. Residues 99-109 (QSPDINQGVDR) are flexible loop. Residues 164–166 (DAK), 230–231 (RF), aspartate 239, 245–246 (RK), alanine 262, and lysine 266 contribute to the ATP site. Aspartate 239 provides a ligand contact to L-methionine. Lysine 270 is a binding site for L-methionine.

This sequence belongs to the AdoMet synthase family. As to quaternary structure, homotetramer; dimer of dimers. Mg(2+) serves as cofactor. Requires K(+) as cofactor.

The protein localises to the cytoplasm. The catalysed reaction is L-methionine + ATP + H2O = S-adenosyl-L-methionine + phosphate + diphosphate. Its pathway is amino-acid biosynthesis; S-adenosyl-L-methionine biosynthesis; S-adenosyl-L-methionine from L-methionine: step 1/1. In terms of biological role, catalyzes the formation of S-adenosylmethionine (AdoMet) from methionine and ATP. The overall synthetic reaction is composed of two sequential steps, AdoMet formation and the subsequent tripolyphosphate hydrolysis which occurs prior to release of AdoMet from the enzyme. The protein is S-adenosylmethionine synthase of Salmonella arizonae (strain ATCC BAA-731 / CDC346-86 / RSK2980).